Here is a 104-residue protein sequence, read N- to C-terminus: Large ribosomal subunit protein bL21 (104 aa).

Belongs to the bacterial ribosomal protein bL21 family. In terms of assembly, part of the 50S ribosomal subunit. Contacts protein L20.

Functionally, this protein binds to 23S rRNA in the presence of protein L20. The protein is Large ribosomal subunit protein bL21 of Salinispora tropica (strain ATCC BAA-916 / DSM 44818 / JCM 13857 / NBRC 105044 / CNB-440).